Reading from the N-terminus, the 152-residue chain is Transmembrane protein 35B (152 aa).

A signal peptide spans 1–21; sequence MLVSLGALRVLLGIFFTLTGA. 3 helical membrane-spanning segments follow: residues 62-82, 85-105, and 111-131; these read AAVG…PPVL, ISNV…VVLE, and YIPA…QFLV.

The protein belongs to the DoxX family.

The protein resides in the membrane. The chain is Transmembrane protein 35B from Rattus norvegicus (Rat).